A 270-amino-acid polypeptide reads, in one-letter code: uncharacterized protein (270 aa).

Disordered regions lie at residues 1 to 21 (MSTNINEEKCLEGDDIKYEKP) and 53 to 77 (PNILSSKHDGDKNKNDKKKEDAKLN). A compositionally biased stretch (basic and acidic residues) spans 58–75 (SKHDGDKNKNDKKKEDAK). Residues 182 to 270 (EENKSREEKH…KIEDNLNTYE (89 aa)) are a coiled coil.

This is an uncharacterized protein from Plasmodium falciparum (isolate 3D7).